We begin with the raw amino-acid sequence, 162 residues long: Cyclic pyranopterin monophosphate synthase (162 aa).

Residues 75-77 (LCH) and 113-114 (ME) contribute to the substrate site. The active site involves Asp-128.

This sequence belongs to the MoaC family. As to quaternary structure, homohexamer; trimer of dimers.

It carries out the reaction (8S)-3',8-cyclo-7,8-dihydroguanosine 5'-triphosphate = cyclic pyranopterin phosphate + diphosphate. It functions in the pathway cofactor biosynthesis; molybdopterin biosynthesis. Functionally, catalyzes the conversion of (8S)-3',8-cyclo-7,8-dihydroguanosine 5'-triphosphate to cyclic pyranopterin monophosphate (cPMP). The chain is Cyclic pyranopterin monophosphate synthase from Klebsiella pneumoniae subsp. pneumoniae (strain ATCC 700721 / MGH 78578).